The chain runs to 244 residues: ATP synthase subunit b 2 (244 aa).

The chain crosses the membrane as a helical span at residues 2-22 (TVDWWTIGLQVINVSVLIWLL).

The protein belongs to the ATPase B chain family. In terms of assembly, F-type ATPases have 2 components, F(1) - the catalytic core - and F(0) - the membrane proton channel. F(1) has five subunits: alpha(3), beta(3), gamma(1), delta(1), epsilon(1). F(0) has three main subunits: a(1), b(2) and c(10-14). The alpha and beta chains form an alternating ring which encloses part of the gamma chain. F(1) is attached to F(0) by a central stalk formed by the gamma and epsilon chains, while a peripheral stalk is formed by the delta and b chains.

Its subcellular location is the cell inner membrane. Functionally, f(1)F(0) ATP synthase produces ATP from ADP in the presence of a proton or sodium gradient. F-type ATPases consist of two structural domains, F(1) containing the extramembraneous catalytic core and F(0) containing the membrane proton channel, linked together by a central stalk and a peripheral stalk. During catalysis, ATP synthesis in the catalytic domain of F(1) is coupled via a rotary mechanism of the central stalk subunits to proton translocation. Its function is as follows. Component of the F(0) channel, it forms part of the peripheral stalk, linking F(1) to F(0). This chain is ATP synthase subunit b 2, found in Gluconobacter oxydans (strain 621H) (Gluconobacter suboxydans).